The sequence spans 271 residues: Aminoglycoside 3'-phosphotransferase (271 aa).

Asp-198 acts as the Proton acceptor in catalysis.

The protein belongs to the aminoglycoside phosphotransferase family.

It catalyses the reaction kanamycin A + ATP = kanamycin 3'-phosphate + ADP + H(+). In terms of biological role, resistance to kanamycin and structurally-related aminoglycosides, including amikacin. In Escherichia coli, this protein is Aminoglycoside 3'-phosphotransferase (aphA).